The sequence spans 548 residues: Membrane protein insertase YidC (548 aa).

The helical transmembrane segment at N6–D26 threads the bilayer. Residues N28 to S55 form a disordered region. Over residues Q30–Q50 the composition is skewed to low complexity. A run of 4 helical transmembrane segments spans residues F350–Y370, L420–L440, L458–I478, and P499–V519.

This sequence belongs to the OXA1/ALB3/YidC family. Type 1 subfamily. Interacts with the Sec translocase complex via SecD. Specifically interacts with transmembrane segments of nascent integral membrane proteins during membrane integration.

The protein localises to the cell inner membrane. Its function is as follows. Required for the insertion and/or proper folding and/or complex formation of integral membrane proteins into the membrane. Involved in integration of membrane proteins that insert both dependently and independently of the Sec translocase complex, as well as at least some lipoproteins. Aids folding of multispanning membrane proteins. This is Membrane protein insertase YidC from Escherichia coli (strain K12 / MC4100 / BW2952).